Reading from the N-terminus, the 475-residue chain is Ribulose bisphosphate carboxylase large chain (475 aa).

A propeptide spanning residues 1–2 is cleaved from the precursor; it reads MS. Pro3 carries the N-acetylproline modification. Position 14 is an N6,N6,N6-trimethyllysine (Lys14). Substrate-binding residues include Asn123 and Thr173. Catalysis depends on Lys175, which acts as the Proton acceptor. Residue Lys177 coordinates substrate. Mg(2+) contacts are provided by Lys201, Asp203, and Glu204. Lys201 carries the N6-carboxylysine modification. Residue His294 is the Proton acceptor of the active site. 3 residues coordinate substrate: Arg295, His327, and Ser379.

The protein belongs to the RuBisCO large chain family. Type I subfamily. As to quaternary structure, heterohexadecamer of 8 large chains and 8 small chains; disulfide-linked. The disulfide link is formed within the large subunit homodimers. Mg(2+) is required as a cofactor. Post-translationally, the disulfide bond which can form in the large chain dimeric partners within the hexadecamer appears to be associated with oxidative stress and protein turnover.

The protein resides in the plastid. Its subcellular location is the chloroplast. The enzyme catalyses 2 (2R)-3-phosphoglycerate + 2 H(+) = D-ribulose 1,5-bisphosphate + CO2 + H2O. It catalyses the reaction D-ribulose 1,5-bisphosphate + O2 = 2-phosphoglycolate + (2R)-3-phosphoglycerate + 2 H(+). Its function is as follows. RuBisCO catalyzes two reactions: the carboxylation of D-ribulose 1,5-bisphosphate, the primary event in carbon dioxide fixation, as well as the oxidative fragmentation of the pentose substrate in the photorespiration process. Both reactions occur simultaneously and in competition at the same active site. In Citrus sinensis (Sweet orange), this protein is Ribulose bisphosphate carboxylase large chain.